A 407-amino-acid polypeptide reads, in one-letter code: Bifunctional enzyme IspD/IspF (407 aa).

Residues 1–247 (MVHIQADGAR…RLSHNALPDV (247 aa)) are 2-C-methyl-D-erythritol 4-phosphate cytidylyltransferase. Residues 248 to 407 (RTGNGYDVHQ…ATVVFQGKPQ (160 aa)) form a 2-C-methyl-D-erythritol 2,4-cyclodiphosphate synthase region. A divalent metal cation is bound by residues D254 and H256. Residues 254–256 (DVH) and 280–281 (HS) each bind 4-CDP-2-C-methyl-D-erythritol 2-phosphate. H288 is an a divalent metal cation binding site. Residues 302–304 (DIG), 378–381 (TTNE), F385, and R388 contribute to the 4-CDP-2-C-methyl-D-erythritol 2-phosphate site.

In the N-terminal section; belongs to the IspD/TarI cytidylyltransferase family. IspD subfamily. It in the C-terminal section; belongs to the IspF family. The cofactor is a divalent metal cation.

It catalyses the reaction 2-C-methyl-D-erythritol 4-phosphate + CTP + H(+) = 4-CDP-2-C-methyl-D-erythritol + diphosphate. It carries out the reaction 4-CDP-2-C-methyl-D-erythritol 2-phosphate = 2-C-methyl-D-erythritol 2,4-cyclic diphosphate + CMP. The protein operates within isoprenoid biosynthesis; isopentenyl diphosphate biosynthesis via DXP pathway; isopentenyl diphosphate from 1-deoxy-D-xylulose 5-phosphate: step 2/6. It participates in isoprenoid biosynthesis; isopentenyl diphosphate biosynthesis via DXP pathway; isopentenyl diphosphate from 1-deoxy-D-xylulose 5-phosphate: step 4/6. In terms of biological role, bifunctional enzyme that catalyzes the formation of 4-diphosphocytidyl-2-C-methyl-D-erythritol from CTP and 2-C-methyl-D-erythritol 4-phosphate (MEP) (IspD), and catalyzes the conversion of 4-diphosphocytidyl-2-C-methyl-D-erythritol 2-phosphate (CDP-ME2P) to 2-C-methyl-D-erythritol 2,4-cyclodiphosphate (ME-CPP) with a corresponding release of cytidine 5-monophosphate (CMP) (IspF). The chain is Bifunctional enzyme IspD/IspF from Allorhizobium ampelinum (strain ATCC BAA-846 / DSM 112012 / S4) (Agrobacterium vitis (strain S4)).